Reading from the N-terminus, the 1940-residue chain is Myosin-2 (1940 aa).

The 50-residue stretch at 33-82 folds into the Myosin N-terminal SH3-like domain; sequence DAKTSVFVAEPKESFVKGTVQSREGGKVTVKTEAGATLTVKEDQVFPMNP. 2 positions are modified to phosphothreonine: Thr64 and Thr69. A Myosin motor domain is found at 86–783; it reads DKIEDMAMMT…LLGLLEEMRD (698 aa). Residue Lys130 is modified to N6,N6,N6-trimethyllysine. Position 179-186 (179-186) interacts with ATP; the sequence is GESGAGKT. Tyr389 carries the phosphotyrosine modification. Ser392 carries the phosphoserine modification. Thr419 carries the phosphothreonine modification. Ser625 bears the Phosphoserine mark. The tract at residues 660–682 is actin-binding; the sequence is LNKLMTNLRSTHPHFVRCIIPNE. His758 is subject to Pros-methylhistidine. The tract at residues 762 to 776 is actin-binding; sequence KFGHTKVFFKAGLLG. Residues 786-815 enclose the IQ domain; sequence LAQLITRTQARCRGFLARVEYQKMVERRES. Residues 844-1940 are a coiled coil; it reads LLKSAETEKE…EVHTKVISEE (1097 aa). A phosphoserine mark is found at Ser1093, Ser1097, Ser1163, and Ser1238. Residues 1154–1173 form a disordered region; sequence RLEEAGGATSAQIEMNKKRE. Thr1242 carries the post-translational modification Phosphothreonine. Ser1244 carries the phosphoserine modification. Thr1256 carries the post-translational modification Phosphothreonine. Phosphoserine is present on Ser1262. Position 1287 is a phosphothreonine (Thr1287). Phosphoserine is present on residues Ser1289, Ser1293, Ser1304, and Ser1307. At Tyr1465 the chain carries Phosphotyrosine. Thr1468 carries the post-translational modification Phosphothreonine. Ser1475 bears the Phosphoserine mark. Tyr1493 carries the phosphotyrosine modification. Residue Ser1496 is modified to Phosphoserine. Thr1502 carries the post-translational modification Phosphothreonine. At Ser1515 the chain carries Phosphoserine. A Phosphothreonine modification is found at Thr1518. 6 positions are modified to phosphoserine: Ser1543, Ser1555, Ser1575, Ser1601, Ser1715, and Ser1727. Residues Thr1731 and Thr1737 each carry the phosphothreonine modification. Ser1740 is modified (phosphoserine). The interval 1884–1920 is disordered; the sequence is KRQAEEAEEQSNTNLSKFRKLQHELEEAEERADIAES.

Belongs to the TRAFAC class myosin-kinesin ATPase superfamily. Myosin family. Muscle myosin is a hexameric protein that consists of 2 heavy chain subunits (MHC), 2 alkali light chain subunits (MLC) and 2 regulatory light chain subunits (MLC-2). Interacts with GCSAM.

It is found in the cytoplasm. The protein localises to the myofibril. Functionally, myosins are actin-based motor molecules with ATPase activity essential for muscle contraction. The protein is Myosin-2 (MYH2) of Canis lupus familiaris (Dog).